The primary structure comprises 436 residues: GTPase Der (436 aa).

2 EngA-type G domains span residues 4–167 (PTVA…PVEE) and 175–351 (IRFS…ESQN). Residues 10–17 (GRPNVGKS), 57–61 (DTGGI), 119–122 (NKVD), 181–188 (GRPNVGKS), 229–233 (DTAGM), and 294–297 (NKWD) each bind GTP. In terms of domain architecture, KH-like spans 352 to 436 (KRIPSAVLND…PINLIARKRK (85 aa)).

The protein belongs to the TRAFAC class TrmE-Era-EngA-EngB-Septin-like GTPase superfamily. EngA (Der) GTPase family. In terms of assembly, associates with the 50S ribosomal subunit.

In terms of biological role, GTPase that plays an essential role in the late steps of ribosome biogenesis. The chain is GTPase Der from Streptococcus agalactiae serotype Ia (strain ATCC 27591 / A909 / CDC SS700).